The primary structure comprises 530 residues: UPF0422 protein lpg2959 (530 aa).

Residues 1-19 form the signal peptide; that stretch reads MKFKKIILALACLSSPLYA. Residues 20–66 adopt a coiled-coil conformation; it reads DQDQQLKSEIQRLQHQAEDLQAQLNRLQKQLANHKSSQQKHEQQAAA. The interval 50 to 81 is disordered; it reads LANHKSSQQKHEQQAAAKPAEPQSKPTVKSGA. Residues 63–75 show a composition bias toward low complexity; the sequence is QAAAKPAEPQSKP.

This sequence belongs to the UPF0422 family.

The chain is UPF0422 protein lpg2959 from Legionella pneumophila subsp. pneumophila (strain Philadelphia 1 / ATCC 33152 / DSM 7513).